A 233-amino-acid polypeptide reads, in one-letter code: DnaA regulatory inactivator Hda (233 aa).

The protein belongs to the DnaA family. HdA subfamily. In terms of assembly, the active form seems to be an ADP-bound monomer. Forms the RIDA complex (regulatory inactivation of DnaA) of ATP-DnaA, ADP-Hda and the DNA-loaded beta sliding clamp (dnaN).

Its function is as follows. Mediates the interaction of DNA replication initiator protein DnaA with DNA polymerase subunit beta sliding clamp (dnaN). Stimulates hydrolysis of ATP-DnaA to ADP-DnaA, rendering DnaA inactive for reinitiation, a process called regulatory inhibition of DnaA or RIDA. This Shigella boydii serotype 4 (strain Sb227) protein is DnaA regulatory inactivator Hda.